Here is a 152-residue protein sequence, read N- to C-terminus: UPF0756 membrane protein Moth_1009 (152 aa).

4 helical membrane passes run 5–25, 41–61, 75–95, and 117–137; these read LIIL…VALA, IFPF…IAAI, LGHV…LITT, and LILG…GPFI.

Belongs to the UPF0756 family.

It is found in the cell membrane. The polypeptide is UPF0756 membrane protein Moth_1009 (Moorella thermoacetica (strain ATCC 39073 / JCM 9320)).